Reading from the N-terminus, the 214-residue chain is Redox-sensing transcriptional repressor Rex (214 aa).

A DNA-binding region (H-T-H motif) is located at residues 17 to 56; it reads LYYRIFKRFYADQVEKASSKQIADAMGIDSATVRRDFSYF. 91–96 contacts NAD(+); sequence GCGNIG.

This sequence belongs to the transcriptional regulatory Rex family. In terms of assembly, homodimer.

The protein localises to the cytoplasm. In terms of biological role, modulates transcription in response to changes in cellular NADH/NAD(+) redox state. This is Redox-sensing transcriptional repressor Rex from Streptococcus equi subsp. zooepidemicus (strain H70).